The sequence spans 448 residues: Probable D-serine dehydratase (448 aa).

K117 carries the N6-(pyridoxal phosphate)lysine modification.

This sequence belongs to the serine/threonine dehydratase family. DsdA subfamily. The cofactor is pyridoxal 5'-phosphate.

It catalyses the reaction D-serine = pyruvate + NH4(+). The chain is Probable D-serine dehydratase (dsdA) from Bacillus subtilis (strain 168).